Consider the following 573-residue polypeptide: Sulfite oxidase, mitochondrial (573 aa).

The N-terminal 34 residues, Met1–Ser34, are a transit peptide targeting the mitochondrion. Over residues Gly14 to Leu26 the composition is skewed to basic residues. A disordered region spans residues Gly14–Gly50. The region spanning Leu108–Glu186 is the Cytochrome b5 heme-binding domain. His144 and His168 together coordinate heme b. The segment at Val190–Ser199 is hinge. The tract at residues Pro200–Lys423 is moco domain. Mo-molybdopterin is bound by residues Tyr240–His244, Cys287, Asp344, His383, Arg388, and Asn399–Lys401. The homodimerization stretch occupies residues Gly424 to Lys567.

Heme b is required as a cofactor. The cofactor is Mo-molybdopterin. As to expression, expressed in the ensheathing glia with relatively weak expression in the CNS cortex (at protein level).

The protein resides in the mitochondrion intermembrane space. It catalyses the reaction sulfite + O2 + H2O = sulfate + H2O2. The protein operates within energy metabolism; sulfur metabolism. Functionally, required in ensheathing glial cells for normal larval locomotion. Oxidizes sulfite which is required to maintain glutamate homeostasis and as a consequence, neuronal network function. The chain is Sulfite oxidase, mitochondrial from Drosophila melanogaster (Fruit fly).